The sequence spans 331 residues: Sideroflexin-5 (331 aa).

The next 4 helical transmembrane spans lie at 104–126, 153–175, 243–265, and 278–300; these read PFGWITVTGMLLPNPSWPTLLFW, YIGAYGAAVTAACSISGGLTYFI, TTMVRAFLPVPLLLMPPCIMPYL, and HIFVNAIVCTLSFAVSLPVALAL.

This sequence belongs to the sideroflexin family.

It is found in the mitochondrion inner membrane. The catalysed reaction is citrate(in) = citrate(out). Functionally, mitochondrial amino-acid transporter. This chain is Sideroflexin-5, found in Caenorhabditis elegans.